The chain runs to 563 residues: Beta-catenin-like protein 1 (563 aa).

An N-acetylmethionine modification is found at M1. Positions 1-81 (MDVGELLSYQ…EEEEPLDESS (81 aa)) are disordered. The Nuclear localization signal motif lies at 16–33 (KRPRDDEEEELKTRRKQT). The span at 34–45 (GPRERGRYREEE) shows a compositional bias: basic and acidic residues. The span at 66–78 (DGEEEEEEEEPLD) shows a compositional bias: acidic residues. 2 HEAT repeats span residues 79 to 129 (ESSV…VVAT) and 134 to 176 (YHLL…TLHE). K91 carries the N6-acetyllysine modification. The short motif at 130 to 140 (MPDLYHLLVEL) is the Nuclear export signal (NES) element. ARM repeat units lie at residues 178-228 (EEGA…MAEF), 229-273 (RPEM…LQDN), 274-323 (DENR…CLML), 325-363 (SNRE…AMIG), and 364-417 (PEGT…LLRN). At S389 the chain carries Phosphoserine. Residues 476–540 (DMEDEFYLRR…HIIKEYAENI (65 aa)) adopt a coiled-coil conformation. At S545 the chain carries Phosphoserine.

Component of the PRP19-CDC5L splicing complex composed of a core complex comprising a homotetramer of PRPF19, CDC5L, PLRG1 and BCAS2, and at least three less stably associated proteins CTNNBL1, CWC15 and HSPA8. Interacts directly with CWC15 and CDC5L in the complex. Interacts with AICDA; the interaction is important for the antibody diversification activity of AICDA. Interacts with PRPF31 (via its NLS). Interacts (via its N-terminal NLS) with KPNA1 and KPNA2.

It localises to the nucleus. Its function is as follows. Component of the PRP19-CDC5L complex that forms an integral part of the spliceosome and is required for activating pre-mRNA splicing. Participates in AID/AICDA-mediated somatic hypermutation (SHM) and class-switch recombination (CSR), 2 processes resulting in the production of high-affinity, mutated isotype-switched antibodies. This Mus musculus (Mouse) protein is Beta-catenin-like protein 1 (Ctnnbl1).